The primary structure comprises 466 residues: RuvB-like helicase 2 (466 aa).

An ATP-binding site is contributed by 74–81; that stretch reads GPPSTGKT.

Belongs to the RuvB family. As to quaternary structure, may form heterododecamers with RVB1. Component of the SWR1 chromatin remodeling complex, the INO80 chromatin remodeling complex, and of the R2TP complex.

It localises to the nucleus. It catalyses the reaction ATP + H2O = ADP + phosphate + H(+). Its function is as follows. DNA helicase which participates in several chromatin remodeling complexes, including the SWR1 and the INO80 complexes. The SWR1 complex mediates the ATP-dependent exchange of histone H2A for the H2A variant HZT1 leading to transcriptional regulation of selected genes by chromatin remodeling. The INO80 complex remodels chromatin by shifting nucleosomes and is involved in DNA repair. Also involved in pre-rRNA processing. The protein is RuvB-like helicase 2 (RVB2) of Yarrowia lipolytica (strain CLIB 122 / E 150) (Yeast).